The chain runs to 375 residues: Neuropeptide Y receptor type 4 (375 aa).

The Extracellular portion of the chain corresponds to 1 to 39 (MNTSHFLAPLFPGSLQGKNGTNPLDSPYNFSDGCQDSAE). N2, N19, and N29 each carry an N-linked (GlcNAc...) asparagine glycan. Residues 40-60 (LLAFIITTYSIETILGVLGNL) form a helical membrane-spanning segment. The Cytoplasmic segment spans residues 61-78 (CLIFVTTRQKEKSNVTNL). Residues 79-99 (LIANLAFSDFLMCLICQPLTV) traverse the membrane as a helical segment. Residues 100-116 (TYTIMDYWIFGEVLCKM) lie on the Extracellular side of the membrane. C114 and C201 form a disulfide bridge. A helical transmembrane segment spans residues 117 to 137 (LTFIQCMSVTVSILSLVLVAL). Residues 138-155 (ERHQLIINPTGWKPSIFQ) lie on the Cytoplasmic side of the membrane. The chain crosses the membrane as a helical span at residues 156–176 (AYLGIVVIWFVSCFLSLPFLA). Topologically, residues 177–211 (NSTLNDLFHYNHSKVVEFLEDKVVCFVSWSSDHHR) are extracellular. N187 carries N-linked (GlcNAc...) asparagine glycosylation. A helical transmembrane segment spans residues 212–232 (LIYTTFLLLFQYCIPLAFILV). Topologically, residues 233–266 (CYIRIYQRLQRQKHVFHAHACSSRAGQMKRINSM) are cytoplasmic. The helical transmembrane segment at 267–287 (LMTMVTAFAVLWLPLHVFNTL) threads the bilayer. Residues 288-301 (EDWYQEAIPACHGN) lie on the Extracellular side of the membrane. Residues 302–322 (LIFLMCHLLAMASTCVNPFIY) traverse the membrane as a helical segment. At 323-375 (GFLNINFKKDIKALVLTCHCRSPRGESEHLPLSTVHTDLSKGSMRMGSKSNFI) the chain is on the cytoplasmic side. C340 carries S-palmitoyl cysteine lipidation.

The protein belongs to the G-protein coupled receptor 1 family. As to expression, heart, detected in small intestine.

It is found in the cell membrane. G protein-coupled receptor for PPY/pancreatic polypeptide/PP that is negatively coupled to cAMP. Has much lower affinity for the NPY/neuropeptide Y and PYY/peptide YY. The sequence is that of Neuropeptide Y receptor type 4 (Npy4r) from Mus musculus (Mouse).